The primary structure comprises 442 residues: Endothelin receptor type B (442 aa).

A signal peptide spans 1–26 (MQPPPSLCGRALVALVLACGLSRIWG). Residues 27–101 (EERGFPPDRA…GPIEIKETFK (75 aa)) are Extracellular-facing. Asn-59 carries an N-linked (GlcNAc...) asparagine glycan. A disordered region spans residues 69 to 88 (AEVPKGDRTAGSPPRTISPP). Residues 102 to 126 (YINTVVSCLVFVLGIIGNSTLLRII) traverse the membrane as a helical segment. The Cytoplasmic portion of the chain corresponds to 127 to 137 (YKNKCMRNGPN). A helical membrane pass occupies residues 138-163 (ILIASLALGDLLHIVIDIPINVYKLL). Over 164–175 (AEDWPFGAEMCK) the chain is Extracellular. The cysteines at positions 174 and 255 are disulfide-linked. A helical transmembrane segment spans residues 176 to 197 (LVPFIQKASVGITVLSLCALSI). The Cytoplasmic portion of the chain corresponds to 198–218 (DRYRAVASWSRIKGIGVPKWT). Residues 219–243 (AVEIVLIWVVSVVLAVPEAIGFDII) traverse the membrane as a helical segment. At 244 to 271 (TMDYKGSYLRICLLHPVQKTAFMQFYKT) the chain is on the extracellular side. The chain crosses the membrane as a helical span at residues 272 to 296 (AKDWWLFSFYFCLPLAITAFFYTLM). The Cytoplasmic portion of the chain corresponds to 297–324 (TCEMLRKKSGMQIALNDHLKQRREVAKT). A Phosphoserine modification is found at Ser-305. The helical transmembrane segment at 325–350 (VFCLVLVFALCWLPLHLSRILKLTLY) threads the bilayer. The Extracellular portion of the chain corresponds to 351–362 (NQNDPNRCELLS). Residues 363-389 (FLLVLDYIGINMASLNSCINPIALYLV) form a helical membrane-spanning segment. Residues 390–442 (SKRFKNCFKSCLCCWCQSFEEKQSLEEKQSCLKFKANDHGYDNFRSSNKYSSS) lie on the Cytoplasmic side of the membrane. S-palmitoyl cysteine attachment occurs at residues Cys-402, Cys-403, and Cys-405. A Phosphoserine modification is found at Ser-419. Tyr-439 is modified (phosphotyrosine). Phosphoserine is present on residues Ser-440, Ser-441, and Ser-442.

This sequence belongs to the G-protein coupled receptor 1 family. Endothelin receptor subfamily. EDNRB sub-subfamily. Palmitoylation of Cys-402 was confirmed by the palmitoylation of Cys-402 in a deletion mutant lacking both Cys-403 and Cys-405. In terms of tissue distribution, expressed in placental stem villi vessels, but not in cultured placental villi smooth muscle cells.

Its subcellular location is the cell membrane. Non-specific receptor for endothelin 1, 2, and 3. Mediates its action by association with G proteins that activate a phosphatidylinositol-calcium second messenger system. The polypeptide is Endothelin receptor type B (Homo sapiens (Human)).